The primary structure comprises 69 residues: Putative membrane protein insertion efficiency factor (69 aa).

This sequence belongs to the UPF0161 family.

The protein localises to the cell membrane. In terms of biological role, could be involved in insertion of integral membrane proteins into the membrane. This chain is Putative membrane protein insertion efficiency factor, found in Clostridium beijerinckii (strain ATCC 51743 / NCIMB 8052) (Clostridium acetobutylicum).